A 484-amino-acid chain; its full sequence is Fumarate hydratase class II (484 aa).

The disordered stretch occupies residues 1-22 (MPSILDLPIGTGATGKRKESDS). Residues 110-112 (SGT), 141-144 (HPND), 151-153 (SSN), and threonine 199 each bind substrate. Histidine 200 acts as the Proton donor/acceptor in catalysis. Serine 330 is an active-site residue. Substrate contacts are provided by residues serine 331 and 336–338 (KVN).

Belongs to the class-II fumarase/aspartase family. Fumarase subfamily. Homotetramer.

It localises to the cytoplasm. The enzyme catalyses (S)-malate = fumarate + H2O. It participates in carbohydrate metabolism; tricarboxylic acid cycle; (S)-malate from fumarate: step 1/1. Its function is as follows. Involved in the TCA cycle. Catalyzes the stereospecific interconversion of fumarate to L-malate. This is Fumarate hydratase class II from Methanosarcina acetivorans (strain ATCC 35395 / DSM 2834 / JCM 12185 / C2A).